The primary structure comprises 879 residues: Aminopeptidase M1 (879 aa).

The required for membrane association stretch occupies residues 98 to 205; that stretch reads HGVGVLKLGF…MSTYLVAIVV (108 aa). Residues glutamate 138 and 271–275 each bind substrate; that span reads GAMEN. Position 307 (histidine 307) interacts with Zn(2+). Glutamate 308 acts as the Proton acceptor in catalysis. Residues histidine 311 and glutamate 330 each contribute to the Zn(2+) site. The Dileucine internalization motif motif lies at 728 to 729; the sequence is LL.

The protein belongs to the peptidase M1 family. As to quaternary structure, homodimer. Interacts with N-1-naphthylphthalamic acid (NPA). The cofactor is Zn(2+). In terms of tissue distribution, ubiquitous with preferential expression in 5 days-old seedlings, roots, young flowers, upper inflorescence stems, and rosette leaves.

Its subcellular location is the membrane. The protein localises to the microsome membrane. The protein resides in the cytoplasm. It carries out the reaction Release of an N-terminal amino acid, Xaa-|-Yaa- from a peptide, amide or arylamide. Xaa is preferably Ala, but may be most amino acids including Pro (slow action). When a terminal hydrophobic residue is followed by a prolyl residue, the two may be released as an intact Xaa-Pro dipeptide.. Functionally, metallopeptidase that binds to the auxin transport inhibitor N-1-naphthylphthalamic acid (NPA). Required for embryonic and seedling development as well as cell cycle progression. Homodimerization is required to proper localization and activity. May play a negative role in the regulation of PIN auxin transport proteins. In Arabidopsis thaliana (Mouse-ear cress), this protein is Aminopeptidase M1 (APM1).